A 391-amino-acid polypeptide reads, in one-letter code: Phosphoglycerate kinase (391 aa).

Substrate-binding positions include 23 to 25 (DFN), Arg38, 61 to 64 (HLGK), Arg117, and Arg150. ATP-binding positions include Lys201, Gly291, Glu322, and 348–351 (GGDS).

The protein belongs to the phosphoglycerate kinase family. In terms of assembly, monomer.

It localises to the cytoplasm. The catalysed reaction is (2R)-3-phosphoglycerate + ATP = (2R)-3-phospho-glyceroyl phosphate + ADP. Its pathway is carbohydrate degradation; glycolysis; pyruvate from D-glyceraldehyde 3-phosphate: step 2/5. The chain is Phosphoglycerate kinase from Clostridium beijerinckii (strain ATCC 51743 / NCIMB 8052) (Clostridium acetobutylicum).